Consider the following 204-residue polypeptide: Holliday junction branch migration complex subunit RuvA (204 aa).

The segment at 1-65 (MIGRLRGAVA…SAGLRLYGFG (65 aa)) is domain I. A domain II region spans residues 66–142 (TREDRRAFVL…PITDGPVLMT (77 aa)). The interval 143–152 (APGAVAAAPA) is flexible linker. The tract at residues 152 to 204 (AKAAPTGDAVAALMGLGVAEVNARRVVEAAAAKLGDEATVQALIKAGLQELGR) is domain III.

This sequence belongs to the RuvA family. In terms of assembly, homotetramer. Forms an RuvA(8)-RuvB(12)-Holliday junction (HJ) complex. HJ DNA is sandwiched between 2 RuvA tetramers; dsDNA enters through RuvA and exits via RuvB. An RuvB hexamer assembles on each DNA strand where it exits the tetramer. Each RuvB hexamer is contacted by two RuvA subunits (via domain III) on 2 adjacent RuvB subunits; this complex drives branch migration. In the full resolvosome a probable DNA-RuvA(4)-RuvB(12)-RuvC(2) complex forms which resolves the HJ.

Its subcellular location is the cytoplasm. Functionally, the RuvA-RuvB-RuvC complex processes Holliday junction (HJ) DNA during genetic recombination and DNA repair, while the RuvA-RuvB complex plays an important role in the rescue of blocked DNA replication forks via replication fork reversal (RFR). RuvA specifically binds to HJ cruciform DNA, conferring on it an open structure. The RuvB hexamer acts as an ATP-dependent pump, pulling dsDNA into and through the RuvAB complex. HJ branch migration allows RuvC to scan DNA until it finds its consensus sequence, where it cleaves and resolves the cruciform DNA. In Caulobacter sp. (strain K31), this protein is Holliday junction branch migration complex subunit RuvA.